Reading from the N-terminus, the 295-residue chain is Ribosomal RNA small subunit methyltransferase A (295 aa).

Positions 40, 42, 67, 88, 118, and 135 each coordinate S-adenosyl-L-methionine.

Belongs to the class I-like SAM-binding methyltransferase superfamily. rRNA adenine N(6)-methyltransferase family. RsmA subfamily.

It localises to the cytoplasm. The catalysed reaction is adenosine(1518)/adenosine(1519) in 16S rRNA + 4 S-adenosyl-L-methionine = N(6)-dimethyladenosine(1518)/N(6)-dimethyladenosine(1519) in 16S rRNA + 4 S-adenosyl-L-homocysteine + 4 H(+). Specifically dimethylates two adjacent adenosines (A1518 and A1519) in the loop of a conserved hairpin near the 3'-end of 16S rRNA in the 30S particle. May play a critical role in biogenesis of 30S subunits. The protein is Ribosomal RNA small subunit methyltransferase A of Arthrobacter sp. (strain FB24).